A 1074-amino-acid polypeptide reads, in one-letter code: DNA annealing helicase and endonuclease ZRANB3 (1074 aa).

The Helicase ATP-binding domain occupies 46-208 (TFALRRDGRC…FMQIEALFPQ (163 aa)). The interval 46-481 (TFALRRDGRC…GRKEKLQAEE (436 aa)) is DNA annealing helicase activity. 59 to 66 (DEMGLGKT) lines the ATP pocket. The DEAH box signature appears at 157–160 (DESH). One can recognise a Helicase C-terminal domain in the interval 325-481 (AVKDYIKMML…GRKEKLQAEE (157 aa)). The PIP-box motif lies at 519 to 526 (QRDIRSFF). A Phosphoserine modification is found at Ser566. The segment at 617 to 647 (FCGEGWQCAFCTYINNSVLPYCEMCENPRGG) adopts a RanBP2-type zinc-finger fold. A disordered region spans residues 659–719 (QNKNKNEKDD…RLTPQPGDEQ (61 aa)). Composition is skewed to basic and acidic residues over residues 662–674 (NKNE…DTSK) and 696–711 (AKSK…EDRL). Positions 1006 to 1046 (PGEGHFWQVDHIKPVSGGGGQCSLDNLQTLCTVCHRERTAQ) constitute an HNH domain. Residues 1006 to 1074 (PGEGHFWQVD…SDITRFLVKK (69 aa)) are endonuclease activity. The short motif at 1069–1073 (RFLVK) is the APIM motif element.

Belongs to the SNF2/RAD54 helicase family. Interacts (via PIP-box and RanBP2-type zinc finger) with PCNA (when PCNA is polyubiquitinated via 'Lys-63'-linked polyubiquitin).

Its subcellular location is the nucleus. It localises to the chromosome. Functionally, DNA annealing helicase and endonuclease required to maintain genome stability at stalled or collapsed replication forks by facilitating fork restart and limiting inappropriate recombination that could occur during template switching events. Recruited to the sites of stalled DNA replication by polyubiquitinated PCNA and acts as a structure-specific endonuclease that cleaves the replication fork D-loop intermediate, generating an accessible 3'-OH group in the template of the leading strand, which is amenable to extension by DNA polymerase. In addition to endonuclease activity, also catalyzes the fork regression via annealing helicase activity in order to prevent disintegration of the replication fork and the formation of double-strand breaks. This Bos taurus (Bovine) protein is DNA annealing helicase and endonuclease ZRANB3 (ZRANB3).